The following is a 673-amino-acid chain: Flotillin family inner membrane protein sll1021 (673 aa).

A helical membrane pass occupies residues 60–80 (LLFFPVVIIAVIFLILVTIFL). Residues 639 to 673 (LQDPPSVSPPSAAVSEDDWPDLAPPTETNFSPEEI) form a disordered region. The span at 664–673 (TETNFSPEEI) shows a compositional bias: polar residues.

This sequence belongs to the band 7/mec-2 family. Flotillin subfamily. As to quaternary structure, homooligomerizes.

Its subcellular location is the cell inner membrane. It is found in the membrane raft. Found in functional membrane microdomains (FMM) that may be equivalent to eukaryotic membrane rafts. FMMs are highly dynamic and increase in number as cells age. Flotillins are thought to be important factors in membrane fluidity. The chain is Flotillin family inner membrane protein sll1021 from Synechocystis sp. (strain ATCC 27184 / PCC 6803 / Kazusa).